The following is a 473-amino-acid chain: Peptidoglycan DL-endopeptidase CwlO (473 aa).

The signal sequence occupies residues 1 to 30; that stretch reads MRKSLITLGLASVIGTSSFLIPFTSKTASA. Disordered stretches follow at residues 31 to 52, 79 to 98, and 237 to 337; these read ETLD…SSIE, ALDT…KTKE, and EASE…GTVI. A compositionally biased stretch (basic and acidic residues) spans 33–44; it reads LDEKKQKIESKQ. Residues 241–250 show a composition bias toward polar residues; sequence LANQKANTEA. 2 stretches are compositionally biased toward basic and acidic residues: residues 251–260 and 267–277; these read EQARIKKEQE and KKQEEAQKASD. Low complexity predominate over residues 291–337; it reads SSKASSSDDSSDNSSDNSSNGSSNSSSNGSSSKKSSGSNSNSGGTVI. Residues 340 to 471 form the NlpC/P60 domain; the sequence is SGGIEGAISV…AAFKGVVRRV (132 aa). Cys-377 (nucleophile) is an active-site residue. Residue His-431 is the Proton acceptor of the active site. Asn-443 is a catalytic residue.

This sequence belongs to the peptidase C40 family. Identified in the extracellular proteome as a number of processing products of about 50 and 30 kDa.

It localises to the secreted. It is found in the cell wall. With respect to regulation, detected in exponentially growing cells, the 50 and 30 kDa processing products disappear upon entry into stationary phase with the concomitant appearance of a 20 kDa products. The 50 kDa form persists in the absence of extracellular proteases. Functionally, the C-terminal part of CwlO shows a cell wall hydrolytic DL-endopeptidase activity. This is Peptidoglycan DL-endopeptidase CwlO (cwlO) from Bacillus subtilis (strain 168).